The chain runs to 397 residues: Major capsid protein (397 aa).

The disordered stretch occupies residues 1–24 (MAAPDPYKPGKYNDPAGGVESSIG).

It localises to the virion. Functionally, assembles to form an icosahedral capsid. This is Major capsid protein from Pseudomonas phage KPP21.